The primary structure comprises 225 residues: Protein-L-isoaspartate O-methyltransferase (225 aa).

Ser-75 is an active-site residue.

The protein belongs to the methyltransferase superfamily. L-isoaspartyl/D-aspartyl protein methyltransferase family.

It is found in the cytoplasm. The enzyme catalyses [protein]-L-isoaspartate + S-adenosyl-L-methionine = [protein]-L-isoaspartate alpha-methyl ester + S-adenosyl-L-homocysteine. In terms of biological role, catalyzes the methyl esterification of L-isoaspartyl residues in peptides and proteins that result from spontaneous decomposition of normal L-aspartyl and L-asparaginyl residues. It plays a role in the repair and/or degradation of damaged proteins. The polypeptide is Protein-L-isoaspartate O-methyltransferase (Xanthomonas campestris pv. campestris (strain 8004)).